The primary structure comprises 301 residues: 4-diphosphocytidyl-2-C-methyl-D-erythritol kinase (301 aa).

The active site involves Lys-18. Residue Pro-109 to Ala-119 coordinates ATP. Asp-151 is a catalytic residue.

It belongs to the GHMP kinase family. IspE subfamily.

It carries out the reaction 4-CDP-2-C-methyl-D-erythritol + ATP = 4-CDP-2-C-methyl-D-erythritol 2-phosphate + ADP + H(+). It participates in isoprenoid biosynthesis; isopentenyl diphosphate biosynthesis via DXP pathway; isopentenyl diphosphate from 1-deoxy-D-xylulose 5-phosphate: step 3/6. Functionally, catalyzes the phosphorylation of the position 2 hydroxy group of 4-diphosphocytidyl-2C-methyl-D-erythritol. This Rhizobium meliloti (strain 1021) (Ensifer meliloti) protein is 4-diphosphocytidyl-2-C-methyl-D-erythritol kinase.